A 226-amino-acid polypeptide reads, in one-letter code: Pyridoxal 5'-phosphate synthase subunit PdxT (226 aa).

60-62 (GES) is a binding site for L-glutamine. The Nucleophile role is filled by Cys-92. L-glutamine contacts are provided by residues Arg-121 and 150 to 151 (IR). Residues His-191 and Glu-193 each act as charge relay system in the active site.

Belongs to the glutaminase PdxT/SNO family. In the presence of PdxS, forms a dodecamer of heterodimers. Only shows activity in the heterodimer.

It catalyses the reaction aldehydo-D-ribose 5-phosphate + D-glyceraldehyde 3-phosphate + L-glutamine = pyridoxal 5'-phosphate + L-glutamate + phosphate + 3 H2O + H(+). The enzyme catalyses L-glutamine + H2O = L-glutamate + NH4(+). The protein operates within cofactor biosynthesis; pyridoxal 5'-phosphate biosynthesis. Functionally, catalyzes the hydrolysis of glutamine to glutamate and ammonia as part of the biosynthesis of pyridoxal 5'-phosphate. The resulting ammonia molecule is channeled to the active site of PdxS. The protein is Pyridoxal 5'-phosphate synthase subunit PdxT of Nocardia farcinica (strain IFM 10152).